A 247-amino-acid chain; its full sequence is MDRIKCTVAYDGMHFCGYQIQPNHRTVQQEIEKALQKLHKGELVRVQASGRTDSTVHAKGQVIHFDTPLSLEEWQWSNALNTMLPDDIVIRQVEKKTEEFHARYGVEKKEYRYRVLLSKTADVFRRNYVYQYPYPLEINSIRKAIPYFIGTHDFTSFCSAKTDKKDKVRTIYEIELIEQDDEIIFRFVGNGFLYNMVRIIVGTLLSVGQGKLDPDSIPEILAKQNRQFAGKMAPGHGLYLWEVNYNN.

Residue Asp53 is the Nucleophile of the active site. Position 111 (Tyr111) interacts with substrate.

Belongs to the tRNA pseudouridine synthase TruA family. In terms of assembly, homodimer.

The catalysed reaction is uridine(38/39/40) in tRNA = pseudouridine(38/39/40) in tRNA. Its function is as follows. Formation of pseudouridine at positions 38, 39 and 40 in the anticodon stem and loop of transfer RNAs. This is tRNA pseudouridine synthase A 1 from Bacillus cereus (strain ATCC 14579 / DSM 31 / CCUG 7414 / JCM 2152 / NBRC 15305 / NCIMB 9373 / NCTC 2599 / NRRL B-3711).